A 558-amino-acid chain; its full sequence is Arginine--tRNA ligase (558 aa).

The short motif at 116 to 126 (ANPNGPLHVGH) is the 'HIGH' region element.

It belongs to the class-I aminoacyl-tRNA synthetase family.

It is found in the cytoplasm. The catalysed reaction is tRNA(Arg) + L-arginine + ATP = L-arginyl-tRNA(Arg) + AMP + diphosphate. This chain is Arginine--tRNA ligase, found in Methanocorpusculum labreanum (strain ATCC 43576 / DSM 4855 / Z).